The following is a 289-amino-acid chain: Diaminopimelate epimerase (289 aa).

Substrate-binding residues include N17, Q47, and N67. C76 (proton donor) is an active-site residue. Residues 77-78 (GN), N164, N198, and 216-217 (ER) contribute to the substrate site. C225 acts as the Proton acceptor in catalysis. 226-227 (GS) is a substrate binding site.

This sequence belongs to the diaminopimelate epimerase family. Homodimer.

It localises to the cytoplasm. The enzyme catalyses (2S,6S)-2,6-diaminopimelate = meso-2,6-diaminopimelate. It functions in the pathway amino-acid biosynthesis; L-lysine biosynthesis via DAP pathway; DL-2,6-diaminopimelate from LL-2,6-diaminopimelate: step 1/1. Catalyzes the stereoinversion of LL-2,6-diaminopimelate (L,L-DAP) to meso-diaminopimelate (meso-DAP), a precursor of L-lysine and an essential component of the bacterial peptidoglycan. This Bradyrhizobium sp. (strain ORS 278) protein is Diaminopimelate epimerase.